The following is a 603-amino-acid chain: MTSSPPSTWRNLDENEALLRHPILNKYPGEDTRPTSKKELAGWYSYGWAAEVFAVCAMGSFLPITLEQMTRDQGVLLSDKKTPCSASWPTAPTAYAAADATASPRVGPPQCVIYVLGIEINTASFAMYTFSISVLIQSVLIISMSAAADHGVYRKKFLLAFALMGALSMILFLFLLPRFYLLAAVLAIIANTGFGASFVLLNSFLPVLVRNDPSIQATRYAAASDEQTYYTQNPSGSNTISPVDEPERLDVSSNDSALVSAELRLSTKLSSNGIGIGYIAAVLVQIGCILLVVATHSTTFSLRLVLFIIGLWWLVFTIPAALWLRPRPGPPVPDSAYGKGRWAWVSYIVFAWVSLGRTIVRARQLKDVLLFLAAWFLLSDGIATVSGTAVLFAKTQLGMNIAALGLINVIAMISGVLGAFSWSYISHHFNLRPSRTIVACICLFEVIPLYGLLGFLPFIKRLGVIGLQQPWEMYVLGAIYGLVLGGLSSYCRSFFGELIPPGFEASFYALYAITDKGSSMFGPAIVGAITDRYGEIRPAFGFLALLILLPLPLMLLVDVDRGKRDAKELAEALEGVKDMGTNGTGYATVATHEVEVGYEGDRE.

The next 4 membrane-spanning stretches (helical) occupy residues 46 to 66 (YGWA…PITL), 122 to 142 (TASF…VLII), 157 to 177 (FLLA…FLLP), and 181 to 201 (LLAA…FVLL). Asparagine 254 carries N-linked (GlcNAc...) asparagine glycosylation. 8 helical membrane-spanning segments follow: residues 274 to 294 (IGIG…LVVA), 304 to 324 (LVLF…ALWL), 342 to 362 (WAWV…IVRA), 368 to 388 (VLLF…VSGT), 401 to 421 (IAAL…GAFS), 439 to 459 (ACIC…LPFI), 464 to 484 (VIGL…GLVL), and 539 to 559 (AFGF…LVDV). N-linked (GlcNAc...) asparagine glycosylation is present at asparagine 582.

It belongs to the ATG22 family.

The protein resides in the vacuole membrane. Vacuolar effluxer which mediate the efflux of amino acids resulting from autophagic degradation. The release of autophagic amino acids allows the maintenance of protein synthesis and viability during nitrogen starvation. In Coccidioides immitis (strain RS) (Valley fever fungus), this protein is Autophagy-related protein 22 (ATG22).